Consider the following 49-residue polypeptide: Astexin-3 (49 aa).

A propeptide spanning residues 1 to 25 (MRTYNRSLPARAGLTDLGKVTTHTK) is cleaved from the precursor. Positions 26–34 (GPTPMVGLD) form a cross-link, isoaspartyl glycine isopeptide (Gly-Asp).

In terms of processing, this lasso peptide is hydrolyzed to a linear form by the isopeptidase AtxE2, in vitro. The isopeptidase AtxE2 only recognizes the threaded form (but not the unthreaded form).

The protein localises to the cytoplasm. The protein resides in the secreted. Functionally, shows weak antimicrobial activity against its phylogenetic relative Caulobacter crescentus. Does not show activity against other bacteria tested (E.coli, Vibrio sp, Burkhoderia thailandensis, and Salmonella newport). This Asticcacaulis excentricus (strain ATCC 15261 / DSM 4724 / KCTC 12464 / NCIMB 9791 / VKM B-1370 / CB 48) protein is Astexin-3.